The sequence spans 398 residues: Transposase for insertion sequence element ISRM5 (398 aa).

It belongs to the transposase mutator family.

In terms of biological role, required for the transposition of the insertion element. This is Transposase for insertion sequence element ISRM5 from Rhizobium meliloti (strain 1021) (Ensifer meliloti).